Here is a 435-residue protein sequence, read N- to C-terminus: Putative BTB/POZ domain-containing protein L275 (435 aa).

Residues 80 to 149 enclose the BTB domain; sequence YDGYVYINVG…IKGKQNDNHN (70 aa).

This sequence belongs to the mimivirus BTB/WD family.

The protein is Putative BTB/POZ domain-containing protein L275 of Acanthamoeba polyphaga mimivirus (APMV).